The chain runs to 514 residues: Uridylate cyclase (514 aa).

2 consecutive Guanylate cyclase domains span residues 49-190 (VHMY…AKLA) and 286-428 (VSLY…EKRQ). A ribonucleoside 5'-triphosphate-binding positions include Y52, R105, F178, 184–188 (NHAAK), and 291–296 (DIDGFT). The Ca(2+) site is built by D291, I292, and D339. Residue D291 coordinates Mn(2+). A disordered region spans residues 495–514 (IRADERQVQPHSRQKVDGSR). The segment covering 496–514 (RADERQVQPHSRQKVDGSR) has biased composition (basic and acidic residues).

The protein belongs to the adenylyl cyclase class-4/guanylyl cyclase family. Pyrimidine cyclase subfamily. Monomer. Requires a divalent metal cation as cofactor.

The protein resides in the cytoplasm. The enzyme catalyses UTP = 3',5'-cyclic UMP + diphosphate. Pycsar (pyrimidine cyclase system for antiphage resistance) provides immunity against bacteriophage. The pyrimidine cyclase (PycC) synthesizes cyclic nucleotides in response to infection; these serve as specific second messenger signals. The signals activate the adjacent effector, leading to bacterial cell death and abortive phage infection. A clade A Pycsar system. Functionally, the pyrimidine cyclase gene of a two-gene Pycsar system, generates cyclic UMP (cUMP) from UTP, has little to no activity on ATP, CTP or GTP. Expression of this and adjacent effector PaPycTIR (AC P0DV41) probably confers resistance to bacteriophage. The genes are probably only expressed in response to bacteriophage infection. Does not have adenylyl or guanylyl cyclase activity. The sequence is that of Uridylate cyclase from Pseudomonas aeruginosa.